Reading from the N-terminus, the 213-residue chain is Thymidylate kinase (213 aa).

Position 10–17 (10–17 (GLEGAGKT)) interacts with ATP.

The protein belongs to the thymidylate kinase family.

The catalysed reaction is dTMP + ATP = dTDP + ADP. Its function is as follows. Phosphorylation of dTMP to form dTDP in both de novo and salvage pathways of dTTP synthesis. The sequence is that of Thymidylate kinase from Escherichia coli O81 (strain ED1a).